Here is a 1051-residue protein sequence, read N- to C-terminus: Inactive tyrosine-protein kinase 7 (1051 aa).

The first 22 residues, 1–22 (MAALRALLLLLAVGAQAAIRFA), serve as a signal peptide directing secretion. Ig-like C2-type domains follow at residues 23-105 (KEPY…ANAS), 115-204 (SVVL…DNFT), 213-298 (PQAV…KATL), 308-388 (PFSP…LSIT), 393-472 (PKWV…GSIE), 487-566 (PPPQ…ATVQ), and 573-661 (VTFK…AFLY). Over 23–685 (KEPYSQDALH…SHTPYKMIQT (663 aa)) the chain is Extracellular. Cys40 and Cys88 are oxidised to a cystine. A glycan (N-linked (GlcNAc...) asparagine) is linked at Asn103. Residues Cys137 and Cys187 are joined by a disulfide bond. Asn202, Asn255, and Asn264 each carry an N-linked (GlcNAc...) asparagine glycan. 5 disulfide bridges follow: Cys234–Cys282, Cys326–Cys372, Cys414–Cys462, Cys505–Cys551, and Cys594–Cys645. Residues Asn444, Asn548, and Asn627 are each glycosylated (N-linked (GlcNAc...) asparagine). The chain crosses the membrane as a helical span at residues 686 to 706 (IGLSVGAAVAYIIIVLGLMFY). Over 707–1051 (CKKRRKAKRL…LGDSPADSKA (345 aa)) the chain is Cytoplasmic. The Protein kinase; inactive domain maps to 777 to 1048 (LQTITTLGRG…AAALGDSPAD (272 aa)).

Belongs to the protein kinase superfamily. Tyr protein kinase family. Insulin receptor subfamily. As to expression, expressed in bone marrow, spleen, bursa, thymus and brain. Weakly expressed in fibroblasts. Also expressed in embryonic liver.

It is found in the membrane. Functionally, inactive tyrosine kinase involved in Wnt signaling. pathway. The polypeptide is Inactive tyrosine-protein kinase 7 (PTK7) (Gallus gallus (Chicken)).